The primary structure comprises 738 residues: Dipeptidyl peptidase 3 (738 aa).

Ala-2 is subject to N-acetylalanine. Zn(2+) is bound at residue His-450. Glu-451 is a catalytic residue. Positions 455 and 508 each coordinate Zn(2+).

The protein belongs to the peptidase M49 family. Zn(2+) serves as cofactor.

Its subcellular location is the cytoplasm. It catalyses the reaction Release of an N-terminal dipeptide from a peptide comprising four or more residues, with broad specificity. Also acts on dipeptidyl 2-naphthylamides.. With respect to regulation, inhibited by spinorphin, an opioid peptide derived from hemoglobin. Functionally, cleaves and degrades bioactive peptides, including angiotensin, Leu-enkephalin and Met-enkephalin. Also cleaves Arg-Arg-beta-naphthylamide. This is Dipeptidyl peptidase 3 (Dpp3) from Rattus norvegicus (Rat).